The primary structure comprises 360 residues: Type 2 DNA topoisomerase 6 subunit A (360 aa).

The Topo IIA-type catalytic domain occupies 3 to 140 (EIERRCLRAL…FHIRPEEDGA (138 aa)). The active-site O-(5'-phospho-DNA)-tyrosine intermediate is the tyrosine 97. Mg(2+) is bound by residues glutamate 193 and aspartate 245.

It belongs to the TOP6A family. In terms of assembly, homodimer. Heterotetramer of two Top6A and two Top6B chains. Mg(2+) serves as cofactor.

The catalysed reaction is ATP-dependent breakage, passage and rejoining of double-stranded DNA.. Its function is as follows. Relaxes both positive and negative superturns and exhibits a strong decatenase activity. This chain is Type 2 DNA topoisomerase 6 subunit A, found in Archaeoglobus fulgidus (strain ATCC 49558 / DSM 4304 / JCM 9628 / NBRC 100126 / VC-16).